Here is a 500-residue protein sequence, read N- to C-terminus: Cysteine--tRNA ligase (500 aa).

Zn(2+) is bound at residue cysteine 29. The 'HIGH' region motif lies at 31-41; the sequence is VTVYDLCHLGH. Residues cysteine 213, histidine 238, and glutamate 242 each coordinate Zn(2+). The 'KMSKS' region signature appears at 270–274; sequence KMSKS. Lysine 273 provides a ligand contact to ATP.

It belongs to the class-I aminoacyl-tRNA synthetase family. As to quaternary structure, monomer. Requires Zn(2+) as cofactor.

It is found in the cytoplasm. It carries out the reaction tRNA(Cys) + L-cysteine + ATP = L-cysteinyl-tRNA(Cys) + AMP + diphosphate. The polypeptide is Cysteine--tRNA ligase (Prochlorococcus marinus (strain NATL1A)).